Here is a 157-residue protein sequence, read N- to C-terminus: uncharacterized protein (157 aa).

A helical transmembrane segment spans residues 6–26 (LVGGVLRVLVVVGAVFDVAVL). The Ricin B-type lectin domain occupies 33 to 157 (ADGPVQLKSR…APDQQWDSVP (125 aa)).

The protein localises to the membrane. This is an uncharacterized protein from Mycobacterium tuberculosis (strain CDC 1551 / Oshkosh).